The sequence spans 255 residues: tRNA (guanine-N(1)-)-methyltransferase (255 aa).

S-adenosyl-L-methionine contacts are provided by residues glycine 113 and 133-138 (IGDYVL).

The protein belongs to the RNA methyltransferase TrmD family. Homodimer.

Its subcellular location is the cytoplasm. It carries out the reaction guanosine(37) in tRNA + S-adenosyl-L-methionine = N(1)-methylguanosine(37) in tRNA + S-adenosyl-L-homocysteine + H(+). In terms of biological role, specifically methylates guanosine-37 in various tRNAs. This Mannheimia succiniciproducens (strain KCTC 0769BP / MBEL55E) protein is tRNA (guanine-N(1)-)-methyltransferase.